Consider the following 479-residue polypeptide: Sulfate adenylyltransferase subunit 1 (479 aa).

A tr-type G domain is found at 25-239 (KSLLRFLTCG…EVLETVDIQR (215 aa)). The G1 stretch occupies residues 34 to 41 (GSVDDGKS). 34–41 (GSVDDGKS) contributes to the GTP binding site. The segment at 92-96 (GITID) is G2. Positions 113–116 (DTPG) are G3. GTP-binding positions include 113–117 (DTPGH) and 168–171 (NKMD). The interval 168–171 (NKMD) is G4. Residues 206-208 (SAL) are G5.

The protein belongs to the TRAFAC class translation factor GTPase superfamily. Classic translation factor GTPase family. CysN/NodQ subfamily. In terms of assembly, heterodimer composed of CysD, the smaller subunit, and CysN.

It carries out the reaction sulfate + ATP + H(+) = adenosine 5'-phosphosulfate + diphosphate. It participates in sulfur metabolism; hydrogen sulfide biosynthesis; sulfite from sulfate: step 1/3. In terms of biological role, with CysD forms the ATP sulfurylase (ATPS) that catalyzes the adenylation of sulfate producing adenosine 5'-phosphosulfate (APS) and diphosphate, the first enzymatic step in sulfur assimilation pathway. APS synthesis involves the formation of a high-energy phosphoric-sulfuric acid anhydride bond driven by GTP hydrolysis by CysN coupled to ATP hydrolysis by CysD. The sequence is that of Sulfate adenylyltransferase subunit 1 from Salmonella gallinarum (strain 287/91 / NCTC 13346).